Reading from the N-terminus, the 663-residue chain is uncharacterized protein (663 aa).

207-214 serves as a coordination point for ATP; it reads GPPGTGKT.

The protein belongs to the DNA2/NAM7 helicase family.

This is an uncharacterized protein from Methanocaldococcus jannaschii (strain ATCC 43067 / DSM 2661 / JAL-1 / JCM 10045 / NBRC 100440) (Methanococcus jannaschii).